A 321-amino-acid polypeptide reads, in one-letter code: GDP-L-fucose synthase (321 aa).

Position 14 to 20 (14 to 20 (GGSGLVG)) interacts with NADP(+). Y143 serves as the catalytic Proton donor/acceptor. NADP(+)-binding positions include K147, 170–173 (PTNV), and H186. Residues K194, W208, R215, and D277 each contribute to the substrate site.

It belongs to the NAD(P)-dependent epimerase/dehydratase family. Fucose synthase subfamily. As to quaternary structure, homodimer.

It carries out the reaction GDP-beta-L-fucose + NADP(+) = GDP-4-dehydro-alpha-D-rhamnose + NADPH + H(+). The protein operates within nucleotide-sugar biosynthesis; GDP-L-fucose biosynthesis via de novo pathway; GDP-L-fucose from GDP-alpha-D-mannose: step 2/2. Catalyzes the two-step NADP-dependent conversion of GDP-4-dehydro-6-deoxy-D-mannose to GDP-fucose, involving an epimerase and a reductase reaction. This chain is GDP-L-fucose synthase, found in Homo sapiens (Human).